The primary structure comprises 228 residues: Max-interacting protein 1 (228 aa).

Disordered regions lie at residues 29-76 (GYAS…NELE) and 162-228 (GSTI…SFTS). Basic residues predominate over residues 43–56 (QHSKPPRRLSRAQK). Positions 57–70 (HSSGSSNTSTANRS) are enriched in polar residues. Residues 67–119 (ANRSTHNELEKNRRAHLRLCLERLKVLIPLGPDCTRHTTLGLLNKAKAHIKKL) enclose the bHLH domain. The span at 173-183 (EREEIEVDVES) shows a compositional bias: acidic residues. Over residues 216-228 (GYSSASVKLSFTS) the composition is skewed to polar residues.

As to quaternary structure, efficient DNA binding requires dimerization with another bHLH protein. Binds DNA as a heterodimer with MAX. Interacts with SMC3. Interacts with RNF17.

Its subcellular location is the nucleus. Its function is as follows. Transcriptional repressor. MXI1 binds with MAX to form a sequence-specific DNA-binding protein complex which recognizes the core sequence 5'-CAC[GA]TG-3'. MXI1 thus antagonizes MYC transcriptional activity by competing for MAX. The protein is Max-interacting protein 1 (Mxi1) of Rattus norvegicus (Rat).